The sequence spans 60 residues: Small, acid-soluble spore protein 1 (60 aa).

The protein belongs to the alpha/beta-type SASP family. In terms of processing, SASP are degraded in the first minutes of spore germination and provide amino acids for both new protein synthesis and metabolism.

In terms of biological role, SASP are bound to spore DNA. They are double-stranded DNA-binding proteins that cause DNA to change to an a-like conformation. They protect the DNA backbone from chemical and enzymatic cleavage and are thus involved in dormant spore's high resistance to UV light. The protein is Small, acid-soluble spore protein 1 (ssp1) of Clostridium perfringens (strain 13 / Type A).